A 153-amino-acid chain; its full sequence is Protein SREK1IP1 (153 aa).

The CCHC-type zinc finger occupies 13–30; it reads AGCRKCGYPGHLTFECRN. The disordered stretch occupies residues 44–153; it reads VSSTSSEDSD…SPNRSEVTKK (110 aa). Ser52 bears the Phosphoserine mark. A compositionally biased stretch (basic and acidic residues) spans 66–84; it reads QEKRINEEEEKKKEKSREK. Basic residues predominate over residues 85 to 94; sequence IKLKKKRKRS. 2 positions are modified to phosphoserine: Ser96 and Ser97. Positions 106–141 are enriched in basic residues; that stretch reads QKKQKYQKKEKKKEKKNKSKKGKHHKKEKKKRKKEK.

Interacts with SREK1/SFRS12.

Its function is as follows. Possible splicing regulator involved in the control of cellular survival. The chain is Protein SREK1IP1 (Srek1ip1) from Rattus norvegicus (Rat).